The sequence spans 198 residues: Armadillo repeat-containing protein 7 (198 aa).

ARM repeat units lie at residues 57–99 (QVLD…QAGG) and 100–140 (LPLI…TSLP). Ser169 is modified (phosphoserine).

Component of the minor spliceosome. Within this complex, interacts with RBM48.

Its function is as follows. As a component of the minor spliceosome, involved in the splicing of U12-type introns in pre-mRNAs. This chain is Armadillo repeat-containing protein 7 (Armc7), found in Mus musculus (Mouse).